Reading from the N-terminus, the 382-residue chain is Lipid-A-disaccharide synthase (382 aa).

This sequence belongs to the LpxB family.

The enzyme catalyses 2-N,3-O-bis[(3R)-3-hydroxytetradecanoyl]-alpha-D-glucosaminyl 1-phosphate + UDP-2-N,3-O-bis[(3R)-3-hydroxytetradecanoyl]-alpha-D-glucosamine = lipid A disaccharide (E. coli) + UDP + H(+). The catalysed reaction is a lipid X + a UDP-2-N,3-O-bis[(3R)-3-hydroxyacyl]-alpha-D-glucosamine = a lipid A disaccharide + UDP + H(+). It participates in glycolipid biosynthesis; lipid IV(A) biosynthesis; lipid IV(A) from (3R)-3-hydroxytetradecanoyl-[acyl-carrier-protein] and UDP-N-acetyl-alpha-D-glucosamine: step 5/6. Its function is as follows. Condensation of UDP-2,3-diacylglucosamine and 2,3-diacylglucosamine-1-phosphate to form lipid A disaccharide, a precursor of lipid A, a phosphorylated glycolipid that anchors the lipopolysaccharide to the outer membrane of the cell. This is Lipid-A-disaccharide synthase from Escherichia coli (strain 55989 / EAEC).